The sequence spans 430 residues: 3-phosphoshikimate 1-carboxyvinyltransferase (430 aa).

Positions 23, 24, and 28 each coordinate 3-phosphoshikimate. Lys-23 contacts phosphoenolpyruvate. Phosphoenolpyruvate is bound by residues Gly-93 and Arg-121. Ser-166, Gln-168, Asp-313, and Lys-340 together coordinate 3-phosphoshikimate. Residue Gln-168 coordinates phosphoenolpyruvate. Asp-313 functions as the Proton acceptor in the catalytic mechanism. Residues Arg-344 and Arg-386 each contribute to the phosphoenolpyruvate site.

The protein belongs to the EPSP synthase family. In terms of assembly, monomer.

The protein localises to the cytoplasm. The enzyme catalyses 3-phosphoshikimate + phosphoenolpyruvate = 5-O-(1-carboxyvinyl)-3-phosphoshikimate + phosphate. It functions in the pathway metabolic intermediate biosynthesis; chorismate biosynthesis; chorismate from D-erythrose 4-phosphate and phosphoenolpyruvate: step 6/7. Catalyzes the transfer of the enolpyruvyl moiety of phosphoenolpyruvate (PEP) to the 5-hydroxyl of shikimate-3-phosphate (S3P) to produce enolpyruvyl shikimate-3-phosphate and inorganic phosphate. This Anaeromyxobacter sp. (strain Fw109-5) protein is 3-phosphoshikimate 1-carboxyvinyltransferase.